A 134-amino-acid chain; its full sequence is Prolactin (134 aa).

Residues cysteine 126 and cysteine 134 are joined by a disulfide bond.

The protein belongs to the somatotropin/prolactin family.

The protein resides in the secreted. This is Prolactin from Bufo japonicus (Japanese common toad).